An 828-amino-acid polypeptide reads, in one-letter code: Beta-galactosidase (828 aa).

The signal sequence occupies residues 1-20 (MKMKQFNLLSLFLILITSFG). N23 and N153 each carry an N-linked (GlcNAc...) asparagine glycan. The active-site Proton donor is the E183. Residue E252 is the Nucleophile of the active site. Residues N253, N350, N379, N492, N667, N799, and N803 are each glycosylated (N-linked (GlcNAc...) asparagine). The SUEL-type lectin domain maps to 742–828 (AHEHNKVELS…PKRLFVEVEC (87 aa)).

It belongs to the glycosyl hydrolase 35 family.

The protein localises to the secreted. It localises to the extracellular space. The protein resides in the apoplast. The catalysed reaction is Hydrolysis of terminal non-reducing beta-D-galactose residues in beta-D-galactosides.. The protein is Beta-galactosidase of Brassica oleracea (Wild cabbage).